A 317-amino-acid polypeptide reads, in one-letter code: Methionyl-tRNA formyltransferase (317 aa).

Residue 110–113 coordinates (6S)-5,6,7,8-tetrahydrofolate; that stretch reads SLLP. Residues 292 to 317 are disordered; it reads RMKGEDFVRGKNVQPGDVLGEANEEN.

Belongs to the Fmt family.

It catalyses the reaction L-methionyl-tRNA(fMet) + (6R)-10-formyltetrahydrofolate = N-formyl-L-methionyl-tRNA(fMet) + (6S)-5,6,7,8-tetrahydrofolate + H(+). Attaches a formyl group to the free amino group of methionyl-tRNA(fMet). The formyl group appears to play a dual role in the initiator identity of N-formylmethionyl-tRNA by promoting its recognition by IF2 and preventing the misappropriation of this tRNA by the elongation apparatus. The sequence is that of Methionyl-tRNA formyltransferase from Bacillus velezensis (strain DSM 23117 / BGSC 10A6 / LMG 26770 / FZB42) (Bacillus amyloliquefaciens subsp. plantarum).